Here is a 331-residue protein sequence, read N- to C-terminus: Ferredoxin--NADP reductase (331 aa).

Positions 34, 42, 47, 87, 120, 285, and 325 each coordinate FAD.

Belongs to the ferredoxin--NADP reductase type 2 family. In terms of assembly, homodimer. It depends on FAD as a cofactor.

The catalysed reaction is 2 reduced [2Fe-2S]-[ferredoxin] + NADP(+) + H(+) = 2 oxidized [2Fe-2S]-[ferredoxin] + NADPH. In Levilactobacillus brevis (strain ATCC 367 / BCRC 12310 / CIP 105137 / JCM 1170 / LMG 11437 / NCIMB 947 / NCTC 947) (Lactobacillus brevis), this protein is Ferredoxin--NADP reductase.